An 858-amino-acid polypeptide reads, in one-letter code: Lysine-specific demethylase JMJ706 (858 aa).

Positions 103-144 constitute a JmjN domain; the sequence is CPVYYPTKEEFEDPIGYIQKIAPVASKYGICKIVSPVSASVP. Residues 250–420 enclose the JmjC domain; it reads KSNWNLKNFS…LGSVASRRYA (171 aa). Fe cation contacts are provided by histidine 293, glutamate 295, and histidine 388. Positions 737–746 are enriched in basic and acidic residues; it reads QHNKRPEDYG. Disordered regions lie at residues 737 to 791 and 829 to 858; these read QHNK…SAKQ and SSST…WPAI. Positions 829-844 are enriched in polar residues; the sequence is SSSTNRVVEQGSSGQR.

Fe(2+) serves as cofactor.

The protein resides in the nucleus. The enzyme catalyses N(6),N(6),N(6)-trimethyl-L-lysyl(9)-[histone H3] + 2 2-oxoglutarate + 2 O2 = N(6)-methyl-L-lysyl(9)-[histone H3] + 2 formaldehyde + 2 succinate + 2 CO2. Its function is as follows. Histone demethylase that demethylates 'Lys-9' (H3K9me) of histone H3 with a specific activity for H3K9me3 and H3K9me2. No activity on H3K4me3, H3K9me1, H3K27me2 and H3K36me3/2. Involved in the control of floral organ development by demethylating H3K9me3 and H3K9me2 in the promoter regions of DH1 and MADS47. The 'Lys-9' demethylation of these two genes is required for induction of their expression. This is Lysine-specific demethylase JMJ706 (JMJ706) from Oryza sativa subsp. japonica (Rice).